The chain runs to 53 residues: uncharacterized protein (53 aa).

This is an uncharacterized protein from Plasmodium falciparum (isolate fcm17 / Senegal).